The chain runs to 431 residues: CinA-like protein (431 aa).

This sequence belongs to the CinA family.

The protein is CinA-like protein of Chlorobium luteolum (strain DSM 273 / BCRC 81028 / 2530) (Pelodictyon luteolum).